The primary structure comprises 262 residues: Cytochrome c oxidase subunit 3 (262 aa).

The next 7 membrane-spanning stretches (helical) occupy residues 16 to 36, 39 to 59, 83 to 103, 128 to 148, 160 to 180, 198 to 218, and 241 to 261; these read PWPY…VVYF, SQTW…IVWW, GMLL…WAFF, FSVP…VTWA, AING…LQAM, FFVA…FLAV, and WYWH…YWWG.

It belongs to the cytochrome c oxidase subunit 3 family. As to quaternary structure, component of the cytochrome c oxidase (complex IV, CIV), a multisubunit enzyme composed of a catalytic core of 3 subunits and several supernumerary subunits. The complex exists as a monomer or a dimer and forms supercomplexes (SCs) in the inner mitochondrial membrane with ubiquinol-cytochrome c oxidoreductase (cytochrome b-c1 complex, complex III, CIII).

It is found in the mitochondrion inner membrane. The catalysed reaction is 4 Fe(II)-[cytochrome c] + O2 + 8 H(+)(in) = 4 Fe(III)-[cytochrome c] + 2 H2O + 4 H(+)(out). In terms of biological role, component of the cytochrome c oxidase, the last enzyme in the mitochondrial electron transport chain which drives oxidative phosphorylation. The respiratory chain contains 3 multisubunit complexes succinate dehydrogenase (complex II, CII), ubiquinol-cytochrome c oxidoreductase (cytochrome b-c1 complex, complex III, CIII) and cytochrome c oxidase (complex IV, CIV), that cooperate to transfer electrons derived from NADH and succinate to molecular oxygen, creating an electrochemical gradient over the inner membrane that drives transmembrane transport and the ATP synthase. Cytochrome c oxidase is the component of the respiratory chain that catalyzes the reduction of oxygen to water. Electrons originating from reduced cytochrome c in the intermembrane space (IMS) are transferred via the dinuclear copper A center (CU(A)) of subunit 2 and heme A of subunit 1 to the active site in subunit 1, a binuclear center (BNC) formed by heme A3 and copper B (CU(B)). The BNC reduces molecular oxygen to 2 water molecules using 4 electrons from cytochrome c in the IMS and 4 protons from the mitochondrial matrix. This is Cytochrome c oxidase subunit 3 (COIII) from Metridium senile (Brown sea anemone).